Reading from the N-terminus, the 416-residue chain is Serine hydroxymethyltransferase 1 (416 aa).

Residues Leu121 and 125-127 (GHL) contribute to the (6S)-5,6,7,8-tetrahydrofolate site. Lys229 is modified (N6-(pyridoxal phosphate)lysine). (6S)-5,6,7,8-tetrahydrofolate-binding positions include Glu245 and 354–356 (SPF).

This sequence belongs to the SHMT family. Homodimer. Pyridoxal 5'-phosphate is required as a cofactor.

Its subcellular location is the cytoplasm. It carries out the reaction (6R)-5,10-methylene-5,6,7,8-tetrahydrofolate + glycine + H2O = (6S)-5,6,7,8-tetrahydrofolate + L-serine. It functions in the pathway one-carbon metabolism; tetrahydrofolate interconversion. It participates in amino-acid biosynthesis; glycine biosynthesis; glycine from L-serine: step 1/1. Catalyzes the reversible interconversion of serine and glycine with tetrahydrofolate (THF) serving as the one-carbon carrier. This reaction serves as the major source of one-carbon groups required for the biosynthesis of purines, thymidylate, methionine, and other important biomolecules. Also exhibits THF-independent aldolase activity toward beta-hydroxyamino acids, producing glycine and aldehydes, via a retro-aldol mechanism. The sequence is that of Serine hydroxymethyltransferase 1 from Photobacterium profundum (strain SS9).